The following is a 683-amino-acid chain: Acyl-CoA synthetase short-chain family member 3, mitochondrial (683 aa).

A mitochondrion-targeting transit peptide spans 1-29 (MKPSWLQCRKVTGAGTLGAPLPGSPSVRG). Position 223–226 (223–226 (EPGR)) interacts with CoA. Residues 421 to 423 (GER) and 442 to 447 (DHWWQT) each bind ATP. N6-succinyllysine is present on Lys-514. An N6-acetyllysine modification is found at Lys-520. Asp-535, Arg-550, and Arg-561 together coordinate ATP. A CoA-binding site is contributed by Arg-620.

The protein belongs to the ATP-dependent AMP-binding enzyme family. Expressed in a wide range of tissues, with the highest levels observed in the liver followed by kidney.

The protein resides in the mitochondrion matrix. The enzyme catalyses acetate + ATP + CoA = acetyl-CoA + AMP + diphosphate. The catalysed reaction is propanoate + ATP + CoA = propanoyl-CoA + AMP + diphosphate. It carries out the reaction butanoate + ATP + CoA = butanoyl-CoA + AMP + diphosphate. Functionally, catalyzes the synthesis of acetyl-CoA from short-chain fatty acids. Propionate is the preferred substrate but can also utilize acetate and butyrate with a much lower affinity. This is Acyl-CoA synthetase short-chain family member 3, mitochondrial (Acss3) from Rattus norvegicus (Rat).